A 155-amino-acid chain; its full sequence is Regulatory protein RecX (155 aa).

It belongs to the RecX family.

It is found in the cytoplasm. Modulates RecA activity. The polypeptide is Regulatory protein RecX (Vibrio parahaemolyticus serotype O3:K6 (strain RIMD 2210633)).